The following is a 543-amino-acid chain: Heparanase-like protein 1 (543 aa).

Residues 1-24 (MGFRVCVIVVFLGCLLLVPEKTMA) form the signal peptide. Residue asparagine 184 is glycosylated (N-linked (GlcNAc...) asparagine). The active-site Proton donor is the glutamate 201. N-linked (GlcNAc...) asparagine glycosylation occurs at asparagine 304. Glutamate 320 serves as the catalytic Nucleophile. 2 N-linked (GlcNAc...) asparagine glycosylation sites follow: asparagine 425 and asparagine 428.

Belongs to the glycosyl hydrolase 79 family.

The protein localises to the lysosome membrane. It is found in the secreted. Endoglycosidase which is a cell surface and extracellular matrix-degrading enzyme. Cleaves heparan sulfate proteoglycans (HSPGs) into heparan sulfate side chains and core proteoglycans. This is Heparanase-like protein 1 from Arabidopsis thaliana (Mouse-ear cress).